The following is a 281-amino-acid chain: Cytochrome c oxidase subunit 3 (281 aa).

7 helical membrane-spanning segments follow: residues 34–54 (PWPIAVSFSLLVVTLSGVMTF), 59–79 (NGLFLLTLGFISLVSTMTLWF), 103–123 (GFVLFVVSEVFFFISIFWAFF), 148–168 (WEVPLLNTVILLSSGATVTYA), 179–199 (VIYGLIATIVLATVFTGFQGF), 220–240 (ATGFHGIHVLVGTIFLTVGLF), and 259–279 (ILYWHFVDVVWLFLFISVYWW).

Belongs to the cytochrome c oxidase subunit 3 family. In terms of assembly, component of the cytochrome c oxidase (complex IV, CIV), a multisubunit enzyme composed of a catalytic core of 3 subunits and several supernumerary subunits. The complex exists as a monomer or a dimer and forms supercomplexes (SCs) in the inner mitochondrial membrane with ubiquinol-cytochrome c oxidoreductase (cytochrome b-c1 complex, complex III, CIII).

It is found in the mitochondrion inner membrane. It catalyses the reaction 4 Fe(II)-[cytochrome c] + O2 + 8 H(+)(in) = 4 Fe(III)-[cytochrome c] + 2 H2O + 4 H(+)(out). In terms of biological role, component of the cytochrome c oxidase, the last enzyme in the mitochondrial electron transport chain which drives oxidative phosphorylation. The respiratory chain contains 3 multisubunit complexes succinate dehydrogenase (complex II, CII), ubiquinol-cytochrome c oxidoreductase (cytochrome b-c1 complex, complex III, CIII) and cytochrome c oxidase (complex IV, CIV), that cooperate to transfer electrons derived from NADH and succinate to molecular oxygen, creating an electrochemical gradient over the inner membrane that drives transmembrane transport and the ATP synthase. Cytochrome c oxidase is the component of the respiratory chain that catalyzes the reduction of oxygen to water. Electrons originating from reduced cytochrome c in the intermembrane space (IMS) are transferred via the dinuclear copper A center (CU(A)) of subunit 2 and heme A of subunit 1 to the active site in subunit 1, a binuclear center (BNC) formed by heme A3 and copper B (CU(B)). The BNC reduces molecular oxygen to 2 water molecules using 4 electrons from cytochrome c in the IMS and 4 protons from the mitochondrial matrix. This is Cytochrome c oxidase subunit 3 (COX3) from Rhizopus stolonifer (Rhizopus nigricans).